The chain runs to 56 residues: GLFIIDKEGVIQHSTINNEGVIQHSTINNLAIGRFGVLLADQGLALRSIPNGPSAL.

The protein belongs to the peroxiredoxin family. AhpC/Prx1 subfamily. In terms of assembly, homodimer; disulfide-linked, upon oxidation.

Its subcellular location is the plastid. It localises to the chloroplast. The catalysed reaction is a hydroperoxide + [thioredoxin]-dithiol = an alcohol + [thioredoxin]-disulfide + H2O. In terms of biological role, thiol-specific peroxidase that catalyzes the reduction of hydrogen peroxide and organic hydroperoxides to water and alcohols, respectively. Plays a role in cell protection against oxidative stress by detoxifying peroxides. May be an antioxidant enzyme particularly in the developing shoot and photosynthesizing leaf. This chain is Putative 2-Cys peroxiredoxin BAS1, found in Pinus strobus (Eastern white pine).